Here is a 48-residue protein sequence, read N- to C-terminus: MSLKEKILDKVEDFLKTIIIKYWYIDLTITIFAFLILYLIEKFRKNKV.

Residues 18–38 (IIIKYWYIDLTITIFAFLILY) traverse the membrane as a helical segment.

Its subcellular location is the host membrane. This is an uncharacterized protein from Acidianus bottle-shaped virus (isolate Italy/Pozzuoli) (ABV).